The sequence spans 534 residues: Cytochrome c oxidase subunit 1 (534 aa).

A helical transmembrane segment spans residues 16 to 36; that stretch reads VLYFIFAIFCGMAGTAMSLII. Positions 39, 42, and 44 each coordinate Ca(2+). Helical transmembrane passes span 57–77, 101–121, 147–167, 182–202, 235–255, and 267–287; these read VLVV…ALIG, ISFW…LVES, AIFA…NFIV, LPLF…SLPV, LFWF…FGII, and VFGE…GFLV. Histidine 62 is a binding site for Fe(II)-heme a. Histidine 241 lines the Cu cation pocket. Positions 241-245 form a cross-link, 1'-histidyl-3'-tyrosine (His-Tyr); it reads HPEVY. Residue tyrosine 245 participates in O2 binding. Cu cation contacts are provided by histidine 290 and histidine 291. 2 helical membrane passes run 310-330 and 338-358; these read MIIA…IYGG and MLYA…GVAL. Positions 368 and 369 each coordinate Mg(2+). 2 helical membrane-spanning segments follow: residues 372-392 and 412-432; these read YVVG…LFAG and IQFW…HFLG. A heme a3-binding site is contributed by histidine 376. Position 378 (histidine 378) interacts with Fe(II)-heme a. Residue proline 441 participates in Ca(2+) binding. The helical transmembrane segment at 452–472 threads the bilayer; it reads YVASIGSIIAVFSLFLFIYIL.

Belongs to the heme-copper respiratory oxidase family. Component of the cytochrome c oxidase (complex IV, CIV), a multisubunit enzyme composed of a catalytic core of 3 subunits and several supernumerary subunits. The complex exists as a monomer or a dimer and forms supercomplexes (SCs) in the inner mitochondrial membrane with ubiquinol-cytochrome c oxidoreductase (cytochrome b-c1 complex, complex III, CIII). It depends on heme as a cofactor. Requires Cu cation as cofactor.

Its subcellular location is the mitochondrion inner membrane. It catalyses the reaction 4 Fe(II)-[cytochrome c] + O2 + 8 H(+)(in) = 4 Fe(III)-[cytochrome c] + 2 H2O + 4 H(+)(out). It functions in the pathway energy metabolism; oxidative phosphorylation. Functionally, component of the cytochrome c oxidase, the last enzyme in the mitochondrial electron transport chain which drives oxidative phosphorylation. The respiratory chain contains 3 multisubunit complexes succinate dehydrogenase (complex II, CII), ubiquinol-cytochrome c oxidoreductase (cytochrome b-c1 complex, complex III, CIII) and cytochrome c oxidase (complex IV, CIV), that cooperate to transfer electrons derived from NADH and succinate to molecular oxygen, creating an electrochemical gradient over the inner membrane that drives transmembrane transport and the ATP synthase. Cytochrome c oxidase is the component of the respiratory chain that catalyzes the reduction of oxygen to water. Electrons originating from reduced cytochrome c in the intermembrane space (IMS) are transferred via the dinuclear copper A center (CU(A)) of subunit 2 and heme A of subunit 1 to the active site in subunit 1, a binuclear center (BNC) formed by heme A3 and copper B (CU(B)). The BNC reduces molecular oxygen to 2 water molecules using 4 electrons from cytochrome c in the IMS and 4 protons from the mitochondrial matrix. The sequence is that of Cytochrome c oxidase subunit 1 (COX1) from Kluyveromyces lactis (strain ATCC 8585 / CBS 2359 / DSM 70799 / NBRC 1267 / NRRL Y-1140 / WM37) (Yeast).